Consider the following 159-residue polypeptide: MITKAIYPGTFDPITNGHLDLVTRASEMFSHVILAIADSSSKKPMFTLAERVILAKQVTAPLKNVEVLGFSELMAEFAKKHNANILVRGLRSVSDFEYEWQLANMNRHLMPKLESVFLMPSEKWSFISSSLVKEVARHGGDITPFLPAPVTKALMTKLA.

Thr-10 lines the substrate pocket. ATP contacts are provided by residues 10-11 (TF) and His-18. The substrate site is built by Lys-42, Met-74, and Arg-88. Residues 89–91 (GLR), Glu-99, and 124–130 (WSFISSS) each bind ATP.

It belongs to the bacterial CoaD family. Homohexamer. Mg(2+) serves as cofactor.

The protein resides in the cytoplasm. It catalyses the reaction (R)-4'-phosphopantetheine + ATP + H(+) = 3'-dephospho-CoA + diphosphate. The protein operates within cofactor biosynthesis; coenzyme A biosynthesis; CoA from (R)-pantothenate: step 4/5. In terms of biological role, reversibly transfers an adenylyl group from ATP to 4'-phosphopantetheine, yielding dephospho-CoA (dPCoA) and pyrophosphate. This chain is Phosphopantetheine adenylyltransferase, found in Yersinia enterocolitica serotype O:8 / biotype 1B (strain NCTC 13174 / 8081).